The following is a 172-amino-acid chain: C-phycocyanin-2 beta subunit (172 aa).

Residue Asn-72 is modified to N4-methylasparagine. (2R,3E)-phycocyanobilin contacts are provided by Cys-82 and Cys-153.

This sequence belongs to the phycobiliprotein family. Heterodimer of an alpha and a beta subunit, which further assembles into trimers and the trimers into hexamers. Contains two covalently linked bilin chromophores.

The protein localises to the cellular thylakoid membrane. Light-harvesting photosynthetic bile pigment-protein from the phycobiliprotein complex (phycobilisome, PBS). Phycocyanin is the major phycobiliprotein in the PBS rod. This is C-phycocyanin-2 beta subunit (cpcB2) from Microchaete diplosiphon (Fremyella diplosiphon).